A 186-amino-acid polypeptide reads, in one-letter code: MESLSLSHHFLIAMPGMGDPLFAKSLVYLCEHGEHGAMGLIINKPSGIAMAQLFDQIDLPLDDEDTRTGLVYFGGPVQPDRGFVLHQPAGNWQSSLMVTDDIALTTSKDVLVAVSEGKKPEQLLISLGYAGWSAGQLEKEIADNGWLTVPAEPSIVFDLPYEERYDAAMALLGFDPSLLSSDVGHA.

Belongs to the UPF0301 (AlgH) family.

The chain is UPF0301 protein CV_3909 from Chromobacterium violaceum (strain ATCC 12472 / DSM 30191 / JCM 1249 / CCUG 213 / NBRC 12614 / NCIMB 9131 / NCTC 9757 / MK).